The sequence spans 305 residues: Acetyl-coenzyme A carboxylase carboxyl transferase subunit alpha (305 aa).

Positions 33 to 280 (AKLESSTALS…KEQILKDLAD (248 aa)) constitute a CoA carboxyltransferase C-terminal domain.

It belongs to the AccA family. As to quaternary structure, acetyl-CoA carboxylase is a heterohexamer composed of biotin carboxyl carrier protein (AccB), biotin carboxylase (AccC) and two subunits each of ACCase subunit alpha (AccA) and ACCase subunit beta (AccD).

It is found in the cytoplasm. The catalysed reaction is N(6)-carboxybiotinyl-L-lysyl-[protein] + acetyl-CoA = N(6)-biotinyl-L-lysyl-[protein] + malonyl-CoA. It participates in lipid metabolism; malonyl-CoA biosynthesis; malonyl-CoA from acetyl-CoA: step 1/1. In terms of biological role, component of the acetyl coenzyme A carboxylase (ACC) complex. First, biotin carboxylase catalyzes the carboxylation of biotin on its carrier protein (BCCP) and then the CO(2) group is transferred by the carboxyltransferase to acetyl-CoA to form malonyl-CoA. This chain is Acetyl-coenzyme A carboxylase carboxyl transferase subunit alpha, found in Treponema denticola (strain ATCC 35405 / DSM 14222 / CIP 103919 / JCM 8153 / KCTC 15104).